The primary structure comprises 425 residues: MALPYLEAVLCFMILMYIFETYLDIRQHRALKLPTLPKPLVGVISGEKFERSRAYSLDKSKFHFIHEAVTILMDTTILYYRVLPWVWKKSGELATNAGLNAENEILHTLAFLAGVMIWSQITDLPFSLYSTFVIEAKHGFNKQTIWLFIRDMIKGILLSILLGPPIVAAIIIIVQNGGPYLAIYLWGFMFALSLVMMTIYPIVIAPLFNKFTPLPEGVLREKIEKLAASLSFPLKKLFVVDGSTRSSHSNAYMYGFFKNKRIVLYDTLIQQCSSEDEIVSVIAHELGHWKLNHTVYSFVAVQLLMFLQFGGYTLVRNSKDLFESFGFEDQPVIIGLIIFQHTIIPVQHLLSFCLNLVSRAFEFQADAFAKNLGYAPQLRAALVKLQEENLSAMNTDPWYSAYHYSHPPLVERLSALEDADSKKEN.

The next 5 helical transmembrane spans lie at 3–23 (LPYL…ETYL), 62–80 (FHFI…ILYY), 109–129 (LAFL…FSLY), 155–175 (GILL…IIVQ), and 188–208 (FMFA…APLF). His-284 is a binding site for Zn(2+). The active site involves Glu-285. His-288 is a Zn(2+) binding site. A run of 2 helical transmembrane segments spans residues 295–315 (VYSF…YTLV) and 332–352 (VIIG…LLSF). Glu-362 lines the Zn(2+) pocket. Asp-366 functions as the Proton donor in the catalytic mechanism.

Belongs to the peptidase M48A family. The cofactor is Zn(2+).

Its subcellular location is the endoplasmic reticulum membrane. The catalysed reaction is Hydrolyzes the peptide bond -P2-(S-farnesyl or geranylgeranyl)C-P1'-P2'-P3'-COOH where P1' and P2' are amino acids with aliphatic side chains and P3' is any C-terminal residue.. Proteolytically removes the C-terminal three residues of farnesylated proteins. This is CAAX prenyl protease 1 homolog (FACE1) from Oryza sativa subsp. japonica (Rice).